We begin with the raw amino-acid sequence, 309 residues long: Porphobilinogen deaminase (309 aa).

The residue at position 242 (C242) is an S-(dipyrrolylmethanemethyl)cysteine.

It belongs to the HMBS family. Monomer. Dipyrromethane is required as a cofactor.

The catalysed reaction is 4 porphobilinogen + H2O = hydroxymethylbilane + 4 NH4(+). The protein operates within porphyrin-containing compound metabolism; protoporphyrin-IX biosynthesis; coproporphyrinogen-III from 5-aminolevulinate: step 2/4. Functionally, tetrapolymerization of the monopyrrole PBG into the hydroxymethylbilane pre-uroporphyrinogen in several discrete steps. The polypeptide is Porphobilinogen deaminase (Actinobacillus succinogenes (strain ATCC 55618 / DSM 22257 / CCUG 43843 / 130Z)).